The primary structure comprises 583 residues: Putative ABC transporter ATP-binding protein exp8 (583 aa).

Residues 25-308 (TFLALSFLLA…VTQNFSTLQT (284 aa)) form the ABC transmembrane type-1 domain. The next 5 membrane-spanning stretches (helical) occupy residues 26-46 (FLAL…PLVA), 61-81 (AVTV…VQYV), 135-155 (MFSG…TTLY), 159-179 (VLDF…FLLV), and 259-279 (LGYA…GITV). The ABC transporter domain maps to 341–574 (IRFEHVCFSY…GGTYHKMYSL (234 aa)). 374 to 381 (GHTGSGKS) contacts ATP.

The protein belongs to the ABC transporter superfamily.

The protein resides in the cell membrane. The sequence is that of Putative ABC transporter ATP-binding protein exp8 (exp8) from Streptococcus pneumoniae serotype 4 (strain ATCC BAA-334 / TIGR4).